Reading from the N-terminus, the 222-residue chain is Cytidylate kinase (222 aa).

10 to 18 (GPAGSGKSS) contacts ATP.

It belongs to the cytidylate kinase family. Type 1 subfamily.

The protein resides in the cytoplasm. It catalyses the reaction CMP + ATP = CDP + ADP. It carries out the reaction dCMP + ATP = dCDP + ADP. This is Cytidylate kinase from Acholeplasma laidlawii (strain PG-8A).